We begin with the raw amino-acid sequence, 252 residues long: JmjC domain-containing protein A (252 aa).

Positions 103–252 (PYLRNFGMLD…VSCWGKEMIM (150 aa)) constitute a JmjC domain.

This chain is JmjC domain-containing protein A (jcdA), found in Dictyostelium discoideum (Social amoeba).